Here is a 525-residue protein sequence, read N- to C-terminus: MAPLSTPESISREISVSSDASADESTSLDQMRAPKRRRLSESSTDSYTAAPAPLPSLSRIKKKSSSTNATSSRKDDENPVLIKDALEIGLNAEENSFKALNVAPWLVGSLTTMAVRKPTAIQRACIPEILKGRDCIGGSRTGSGKTIAFSVPILQKWAEDPFGIFAVILTPTRELALQIFEQIKAISAPQSMKPVLITGGTDMRSQAIELAGRPHVVVATPGRLADHINTSGTDTVAGLKRVRMVVLDEADRLLSPGPGSMLPDVETCLSFLPGPSQRQTLLFTATLTPEVRALKSMPQTPGKPPIFVTEISTEAKDTVPPTLRTTYVQVPLTHREAFLHVLLSTESNITKSAIVFTNTTKSADLLERLLRSLGHRVTSLHSLLPQSERNSNLARFRASAARVLVATDVASRGLDIPSVSLVVNFEVPRNPDDYVHRVGRTARAGRTGEAVTLVGQRDVQLVLAIEERIGRKMVEYEEEGVNLEARVAKGSLLKEVGAAKREAMVEIDEGRDVLGRKRNKLKKVR.

The span at 1 to 29 (MAPLSTPESISREISVSSDASADESTSLD) shows a compositional bias: polar residues. The segment at 1 to 76 (MAPLSTPESI…TNATSSRKDD (76 aa)) is disordered. The short motif at 95 to 123 (NSFKALNVAPWLVGSLTTMAVRKPTAIQR) is the Q motif element. The region spanning 126–305 (IPEILKGRDC…SMPQTPGKPP (180 aa)) is the Helicase ATP-binding domain. Position 139–146 (139–146 (SRTGSGKT)) interacts with ATP. The DEAD box motif lies at 248-251 (DEAD). Positions 337–484 (AFLHVLLSTE…EYEEEGVNLE (148 aa)) constitute a Helicase C-terminal domain.

Belongs to the DEAD box helicase family. DDX49/DBP8 subfamily.

It localises to the nucleus. The protein localises to the nucleolus. It catalyses the reaction ATP + H2O = ADP + phosphate + H(+). Functionally, ATP-binding RNA helicase involved in 40S ribosomal subunit biogenesis and is required for the normal formation of 18S rRNAs through pre-rRNA processing at A0, A1 and A2 sites. Required for vegetative growth. This chain is ATP-dependent RNA helicase dbp8 (dbp8), found in Emericella nidulans (strain FGSC A4 / ATCC 38163 / CBS 112.46 / NRRL 194 / M139) (Aspergillus nidulans).